The following is a 361-amino-acid chain: Phospho-N-acetylmuramoyl-pentapeptide-transferase (361 aa).

The next 10 helical transmembrane spans lie at 27 to 47 (ILAS…MIRW), 70 to 90 (GTPT…CLLW), 97 to 117 (SLWL…VDDY), 134 to 154 (YFWQ…NASL), 167 to 187 (TVTW…IVGS), 199 to 219 (GLAI…AYAS), 236 to 256 (TGEL…FLWY), 263 to 283 (VFMG…VAVV), 288 to 308 (LVLL…ILQV), and 338 to 358 (KVIV…LATL).

The protein belongs to the glycosyltransferase 4 family. MraY subfamily. The cofactor is Mg(2+).

Its subcellular location is the cell inner membrane. It catalyses the reaction UDP-N-acetyl-alpha-D-muramoyl-L-alanyl-gamma-D-glutamyl-meso-2,6-diaminopimeloyl-D-alanyl-D-alanine + di-trans,octa-cis-undecaprenyl phosphate = di-trans,octa-cis-undecaprenyl diphospho-N-acetyl-alpha-D-muramoyl-L-alanyl-D-glutamyl-meso-2,6-diaminopimeloyl-D-alanyl-D-alanine + UMP. It participates in cell wall biogenesis; peptidoglycan biosynthesis. In terms of biological role, catalyzes the initial step of the lipid cycle reactions in the biosynthesis of the cell wall peptidoglycan: transfers peptidoglycan precursor phospho-MurNAc-pentapeptide from UDP-MurNAc-pentapeptide onto the lipid carrier undecaprenyl phosphate, yielding undecaprenyl-pyrophosphoryl-MurNAc-pentapeptide, known as lipid I. In Legionella pneumophila subsp. pneumophila (strain Philadelphia 1 / ATCC 33152 / DSM 7513), this protein is Phospho-N-acetylmuramoyl-pentapeptide-transferase.